Reading from the N-terminus, the 358-residue chain is Probable branched-chain-amino-acid aminotransferase (358 aa).

The residue at position 196 (K196) is an N6-(pyridoxal phosphate)lysine.

It belongs to the class-IV pyridoxal-phosphate-dependent aminotransferase family. The cofactor is pyridoxal 5'-phosphate.

It carries out the reaction L-leucine + 2-oxoglutarate = 4-methyl-2-oxopentanoate + L-glutamate. The enzyme catalyses L-isoleucine + 2-oxoglutarate = (S)-3-methyl-2-oxopentanoate + L-glutamate. The catalysed reaction is L-valine + 2-oxoglutarate = 3-methyl-2-oxobutanoate + L-glutamate. Its pathway is amino-acid biosynthesis; L-isoleucine biosynthesis; L-isoleucine from 2-oxobutanoate: step 4/4. It functions in the pathway amino-acid biosynthesis; L-leucine biosynthesis; L-leucine from 3-methyl-2-oxobutanoate: step 4/4. It participates in amino-acid biosynthesis; L-valine biosynthesis; L-valine from pyruvate: step 4/4. Functionally, acts on leucine, isoleucine and valine. In Staphylococcus epidermidis (strain ATCC 35984 / DSM 28319 / BCRC 17069 / CCUG 31568 / BM 3577 / RP62A), this protein is Probable branched-chain-amino-acid aminotransferase (ilvE).